Reading from the N-terminus, the 122-residue chain is NADH-quinone oxidoreductase subunit A (122 aa).

A run of 3 helical transmembrane segments spans residues 10–30 (MIVL…LTLG), 66–86 (IFAL…PWAV), and 91–111 (LGLF…VGLA).

This sequence belongs to the complex I subunit 3 family. As to quaternary structure, NDH-1 is composed of 14 different subunits. Subunits NuoA, H, J, K, L, M, N constitute the membrane sector of the complex.

It is found in the cell membrane. The catalysed reaction is a quinone + NADH + 5 H(+)(in) = a quinol + NAD(+) + 4 H(+)(out). Its function is as follows. NDH-1 shuttles electrons from NADH, via FMN and iron-sulfur (Fe-S) centers, to quinones in the respiratory chain. The immediate electron acceptor for the enzyme in this species is believed to be a menaquinone. Couples the redox reaction to proton translocation (for every two electrons transferred, four hydrogen ions are translocated across the cytoplasmic membrane), and thus conserves the redox energy in a proton gradient. The sequence is that of NADH-quinone oxidoreductase subunit A from Bacillus thuringiensis subsp. konkukian (strain 97-27).